Consider the following 219-residue polypeptide: ATP-dependent dethiobiotin synthetase BioD (219 aa).

12–17 contacts ATP; that stretch reads EVGKTY. Thr-16 is a binding site for Mg(2+). Lys-37 is an active-site residue. Residue Ser-41 coordinates substrate. Residues Asp-52, 114 to 117, and 174 to 175 each bind ATP; these read EGAG and NC. Mg(2+)-binding residues include Asp-52 and Glu-114.

It belongs to the dethiobiotin synthetase family. In terms of assembly, homodimer. The cofactor is Mg(2+).

The protein resides in the cytoplasm. It catalyses the reaction (7R,8S)-7,8-diammoniononanoate + CO2 + ATP = (4R,5S)-dethiobiotin + ADP + phosphate + 3 H(+). Its pathway is cofactor biosynthesis; biotin biosynthesis; biotin from 7,8-diaminononanoate: step 1/2. Functionally, catalyzes a mechanistically unusual reaction, the ATP-dependent insertion of CO2 between the N7 and N8 nitrogen atoms of 7,8-diaminopelargonic acid (DAPA, also called 7,8-diammoniononanoate) to form a ureido ring. This is ATP-dependent dethiobiotin synthetase BioD from Francisella tularensis subsp. holarctica (strain FTNF002-00 / FTA).